We begin with the raw amino-acid sequence, 325 residues long: ATP-dependent 6-phosphofructokinase (325 aa).

Gly-12 contacts ATP. 22–26 (RTIVK) is a binding site for ADP. ATP contacts are provided by residues 73–74 (RY) and 103–106 (GDGS). Asp-104 provides a ligand contact to Mg(2+). Position 126–128 (126–128 (TID)) interacts with substrate. Asp-128 serves as the catalytic Proton acceptor. ADP is bound at residue Arg-155. Position 170–172 (170–172 (MGH)) interacts with substrate. ADP is bound by residues 186 to 188 (GAE), Lys-213, and 215 to 217 (KRS). Substrate-binding positions include Glu-224, Arg-246, and 252–255 (HTQR).

Belongs to the phosphofructokinase type A (PFKA) family. ATP-dependent PFK group I subfamily. Prokaryotic clade 'B1' sub-subfamily. As to quaternary structure, homotetramer. The cofactor is Mg(2+).

Its subcellular location is the cytoplasm. The enzyme catalyses beta-D-fructose 6-phosphate + ATP = beta-D-fructose 1,6-bisphosphate + ADP + H(+). It functions in the pathway carbohydrate degradation; glycolysis; D-glyceraldehyde 3-phosphate and glycerone phosphate from D-glucose: step 3/4. Allosterically activated by ADP and other diphosphonucleosides, and allosterically inhibited by phosphoenolpyruvate. Functionally, catalyzes the phosphorylation of D-fructose 6-phosphate to fructose 1,6-bisphosphate by ATP, the first committing step of glycolysis. This is ATP-dependent 6-phosphofructokinase from Mycoplasma mobile (strain ATCC 43663 / 163K / NCTC 11711) (Mesomycoplasma mobile).